The primary structure comprises 251 residues: tRNA (guanine-N(1)-)-methyltransferase (251 aa).

Residues Gly-122 and 142–147 (IGDYVL) contribute to the S-adenosyl-L-methionine site. The disordered stretch occupies residues 226–251 (RARRPDLFATRPQPNRQKPPKNTTDG). The span at 237–251 (PQPNRQKPPKNTTDG) shows a compositional bias: polar residues.

This sequence belongs to the RNA methyltransferase TrmD family. As to quaternary structure, homodimer.

Its subcellular location is the cytoplasm. The enzyme catalyses guanosine(37) in tRNA + S-adenosyl-L-methionine = N(1)-methylguanosine(37) in tRNA + S-adenosyl-L-homocysteine + H(+). Its function is as follows. Specifically methylates guanosine-37 in various tRNAs. The protein is tRNA (guanine-N(1)-)-methyltransferase of Rhodopseudomonas palustris (strain BisB18).